The primary structure comprises 173 residues: NAD(P)H-quinone oxidoreductase subunit I, chloroplastic (173 aa).

4Fe-4S ferredoxin-type domains lie at 55–84 (GRIHFEFDKCIACEVCVRVCPINLPVVDWD) and 95–124 (RSYSIDFGVCIFCGNCVEYCPTNCLSMTEE). [4Fe-4S] cluster contacts are provided by Cys-64, Cys-67, Cys-70, Cys-74, Cys-104, Cys-107, Cys-110, and Cys-114.

The protein belongs to the complex I 23 kDa subunit family. As to quaternary structure, NDH is composed of at least 16 different subunits, 5 of which are encoded in the nucleus. Requires [4Fe-4S] cluster as cofactor.

It localises to the plastid. It is found in the chloroplast thylakoid membrane. The enzyme catalyses a plastoquinone + NADH + (n+1) H(+)(in) = a plastoquinol + NAD(+) + n H(+)(out). The catalysed reaction is a plastoquinone + NADPH + (n+1) H(+)(in) = a plastoquinol + NADP(+) + n H(+)(out). NDH shuttles electrons from NAD(P)H:plastoquinone, via FMN and iron-sulfur (Fe-S) centers, to quinones in the photosynthetic chain and possibly in a chloroplast respiratory chain. The immediate electron acceptor for the enzyme in this species is believed to be plastoquinone. Couples the redox reaction to proton translocation, and thus conserves the redox energy in a proton gradient. The sequence is that of NAD(P)H-quinone oxidoreductase subunit I, chloroplastic from Nephroselmis olivacea (Green alga).